Here is a 158-residue protein sequence, read N- to C-terminus: 2-C-methyl-D-erythritol 2,4-cyclodiphosphate synthase (158 aa).

2 residues coordinate a divalent metal cation: Asp9 and His11. Residues 9-11 and 35-36 contribute to the 4-CDP-2-C-methyl-D-erythritol 2-phosphate site; these read DVH and HS. A divalent metal cation is bound at residue His43. Residues 57–59, 62–66, 133–136, Phe140, and Arg143 contribute to the 4-CDP-2-C-methyl-D-erythritol 2-phosphate site; these read DIG, FPDTD, and TTSE.

The protein belongs to the IspF family. Homotrimer. It depends on a divalent metal cation as a cofactor.

The catalysed reaction is 4-CDP-2-C-methyl-D-erythritol 2-phosphate = 2-C-methyl-D-erythritol 2,4-cyclic diphosphate + CMP. It functions in the pathway isoprenoid biosynthesis; isopentenyl diphosphate biosynthesis via DXP pathway; isopentenyl diphosphate from 1-deoxy-D-xylulose 5-phosphate: step 4/6. Involved in the biosynthesis of isopentenyl diphosphate (IPP) and dimethylallyl diphosphate (DMAPP), two major building blocks of isoprenoid compounds. Catalyzes the conversion of 4-diphosphocytidyl-2-C-methyl-D-erythritol 2-phosphate (CDP-ME2P) to 2-C-methyl-D-erythritol 2,4-cyclodiphosphate (ME-CPP) with a corresponding release of cytidine 5-monophosphate (CMP). The sequence is that of 2-C-methyl-D-erythritol 2,4-cyclodiphosphate synthase from Pasteurella multocida (strain Pm70).